Here is a 412-residue protein sequence, read N- to C-terminus: DnaJ homolog subfamily A member 2 (412 aa).

Positions 8-70 (KLYDILGVPP…EKRELYDRYG (63 aa)) constitute a J domain. N6-acetyllysine is present on lysine 39. A phosphoserine mark is found at serine 78 and serine 123. Residues 130-214 (GKTTKLQLSK…CEGKKVIKEV (85 aa)) form a CR-type zinc finger. Residue lysine 134 forms a Glycyl lysine isopeptide (Lys-Gly) (interchain with G-Cter in SUMO2) linkage. Zn(2+) contacts are provided by cysteine 143 and cysteine 146. The stretch at 143-150 (CSACSGQG) is one CXXCXGXG motif repeat. Lysine 152 carries the post-translational modification N6-acetyllysine. Positions 159, 162, 186, 189, 202, and 205 each coordinate Zn(2+). CXXCXGXG motif repeat units lie at residues 159–166 (CSACRGRG), 186–193 (CSDCNGEG), and 202–209 (CKKCEGKK). The interval 359-412 (PEVPNIIGDTEEVELQEFDSTRGSGGGQRREAYNDSSDEESSSHHGPGVQCAHQ) is disordered. Position 391 is a phosphotyrosine (tyrosine 391). Phosphoserine is present on residues serine 394 and serine 395. Cysteine 409 is modified (cysteine methyl ester). Residue cysteine 409 is the site of S-farnesyl cysteine attachment. The propeptide at 410–412 (AHQ) is removed in mature form.

Its subcellular location is the membrane. Co-chaperone of Hsc70. Stimulates ATP hydrolysis and the folding of unfolded proteins mediated by HSPA1A/B (in vitro). The protein is DnaJ homolog subfamily A member 2 (DNAJA2) of Bos taurus (Bovine).